A 422-amino-acid chain; its full sequence is Phosphoribosylamine--glycine ligase (422 aa).

The 206-residue stretch at 107 to 312 (KEVMAAAGVR…LGQLLYAAGT (206 aa)) folds into the ATP-grasp domain. Residue 138–193 (PPVGDLSWVVKDDRLAAGKGVVVTSDRDVARTHAAGLLEAGHPVLLESYLDGPEVS) coordinates ATP. 2 residues coordinate Mg(2+): Glu282 and Asn284.

It belongs to the GARS family. Requires Mg(2+) as cofactor. It depends on Mn(2+) as a cofactor.

It carries out the reaction 5-phospho-beta-D-ribosylamine + glycine + ATP = N(1)-(5-phospho-beta-D-ribosyl)glycinamide + ADP + phosphate + H(+). It functions in the pathway purine metabolism; IMP biosynthesis via de novo pathway; N(1)-(5-phospho-D-ribosyl)glycinamide from 5-phospho-alpha-D-ribose 1-diphosphate: step 2/2. This chain is Phosphoribosylamine--glycine ligase, found in Mycobacterium leprae (strain TN).